A 273-amino-acid chain; its full sequence is Putative phosphoenolpyruvate synthase regulatory protein (273 aa).

153–160 contributes to the ADP binding site; sequence GVSRSGKT.

The protein belongs to the pyruvate, phosphate/water dikinase regulatory protein family. PSRP subfamily.

It catalyses the reaction [pyruvate, water dikinase] + ADP = [pyruvate, water dikinase]-phosphate + AMP + H(+). It carries out the reaction [pyruvate, water dikinase]-phosphate + phosphate + H(+) = [pyruvate, water dikinase] + diphosphate. In terms of biological role, bifunctional serine/threonine kinase and phosphorylase involved in the regulation of the phosphoenolpyruvate synthase (PEPS) by catalyzing its phosphorylation/dephosphorylation. This chain is Putative phosphoenolpyruvate synthase regulatory protein, found in Variovorax paradoxus (strain S110).